Reading from the N-terminus, the 201-residue chain is ATP-dependent Clp protease proteolytic subunit (201 aa).

The Nucleophile role is filled by S105. Residue H130 is part of the active site.

Belongs to the peptidase S14 family. Fourteen ClpP subunits assemble into 2 heptameric rings which stack back to back to give a disk-like structure with a central cavity, resembling the structure of eukaryotic proteasomes.

It localises to the cytoplasm. It carries out the reaction Hydrolysis of proteins to small peptides in the presence of ATP and magnesium. alpha-casein is the usual test substrate. In the absence of ATP, only oligopeptides shorter than five residues are hydrolyzed (such as succinyl-Leu-Tyr-|-NHMec, and Leu-Tyr-Leu-|-Tyr-Trp, in which cleavage of the -Tyr-|-Leu- and -Tyr-|-Trp bonds also occurs).. Its function is as follows. Cleaves peptides in various proteins in a process that requires ATP hydrolysis. Has a chymotrypsin-like activity. Plays a major role in the degradation of misfolded proteins. This Acinetobacter baylyi (strain ATCC 33305 / BD413 / ADP1) protein is ATP-dependent Clp protease proteolytic subunit.